The sequence spans 1601 residues: PH and SEC7 domain-containing protein (1601 aa).

Positions 1 to 340 are mediates regulation of axon branching and microtubule organization; sequence MSEELKVVLR…TGDLILNLSR (340 aa). The PDZ domain occupies 6-88; sequence KVVLRRSEQH…LVTLELKRDP (83 aa). 7 disordered regions span residues 113–192, 211–322, 339–440, 459–657, 737–780, 872–965, and 1040–1126; these read NIYD…SSTK, TSPT…PAKA, SRTP…SLTN, LEED…SSSG, NSSL…SETA, QQQQ…LLSC, and QQLK…SDVE. Over residues 118–128 the composition is skewed to polar residues; that stretch reads HSSSTNSSPNH. Low complexity predominate over residues 166 to 191; that stretch reads ASGSTTTTTTATHTHSHSRNSSASST. Polar residues predominate over residues 283–297; that stretch reads QSLQHSNSYSGSPVT. A compositionally biased stretch (basic and acidic residues) spans 300 to 311; that stretch reads RFADREPEREPE. The short motif at 323-340 is the Microtubule elimination domain (MTED); Binds tubulin and blocks microtubule polymerization element; the sequence is PRFEAYMMTGDLILNLSR. Residues 339 to 348 are compositionally biased toward polar residues; the sequence is SRTPQTSNPL. A compositionally biased stretch (basic and acidic residues) spans 353–362; sequence KKIDSLRDSP. Composition is skewed to low complexity over residues 382-399, 409-424, and 468-487; these read SSPT…TSSD, QKQQ…QQQQ, and QRQQ…YEYY. Positions 488–505 are enriched in acidic residues; it reads QNEDELEEQEEVEEEREE. The segment covering 510–519 has biased composition (polar residues); that stretch reads YDITNIETYQ. A compositionally biased stretch (acidic residues) spans 526–557; it reads DDDDSDRQCLVDDDDDDDAYDDEENDAGDEDY. Composition is skewed to polar residues over residues 558-567 and 617-630; these read STNSLGSGSA and TSFS…SLST. Residues 640 to 657 show a composition bias toward low complexity; that stretch reads SVPTSPEPSSLVPESSSG. Over residues 737 to 747 the composition is skewed to polar residues; the sequence is NSSLASNNNEG. Low complexity-rich tracts occupy residues 752-780, 872-942, 949-965, and 1040-1052; these read NRSS…SETA, QQQQ…QQQQ, GGQV…LLSC, and QQLK…QQQQ. Residues 894–1601 form a mediates association to the membrane and rescricts the microtubule-inhibiting activity to the cell cortex region; that stretch reads SSSPQHSAVG…PTNRKEKKKK (708 aa). Positions 1053-1071 are enriched in basic and acidic residues; that stretch reads QRERERDRDRDREQSEHKV. One can recognise an SEC7 domain in the interval 1125–1291; it reads VESLHSYHYS…KSLYQAIKTK (167 aa). Residues 1332–1445 form the PH domain; sequence VEYKKGYVMR…WVETINYVCA (114 aa). The segment at 1544–1601 is disordered; it reads LELQAQQPSPASHEEEADTFPVGTTACTPPTPQSINQKDQQKEQQQQQPTNRKEKKKK. Over residues 1568 to 1579 the composition is skewed to polar residues; that stretch reads TACTPPTPQSIN.

Belongs to the PSD family. As to quaternary structure, interacts (via MTED motif) with tubulin. As to expression, expressed in the head (at protein level).

The protein localises to the cell projection. The protein resides in the axon. It localises to the cytoplasm. It is found in the cell membrane. Its subcellular location is the cell cortex. Guanine nucleotide exchange factor for Arf6. Regulates axon growth and branching by inhibiting microtubule polymerisation at the cortex. Together with shot, promotes axonal microtubule bundle integrity. Required for normal ethanol-induced tolerance and preference. Probably by activating Arf6, counteracts ethanol-induced sedation. The chain is PH and SEC7 domain-containing protein from Drosophila melanogaster (Fruit fly).